The chain runs to 68 residues: Protein transport protein Sec61 subunit gamma (68 aa).

Residues 1-32 (MDQVMAWVEPGKQFAKDSIRLVKRCTKPDRKE) lie on the Cytoplasmic side of the membrane. The helical transmembrane segment at 33–61 (FQKIAVATAIGFAIMGFIGFFVKLIHIPI) threads the bilayer. At 62–68 (NNIIVGS) the chain is on the extracellular side.

It belongs to the SecE/SEC61-gamma family. As to quaternary structure, heterotrimeric complex composed of SEC61-alpha, SEC61-beta and SEC61-gamma. Component of the ribosome-associated ER translocon complex.

It is found in the endoplasmic reticulum membrane. Necessary for protein translocation in the endoplasmic reticulum and multi-pass membrane protein biogenesis. The sequence is that of Protein transport protein Sec61 subunit gamma (SEC61G) from Ciona intestinalis (Transparent sea squirt).